The sequence spans 102 residues: Large ribosomal subunit protein bL21 (102 aa).

It belongs to the bacterial ribosomal protein bL21 family. Part of the 50S ribosomal subunit. Contacts protein L20.

This protein binds to 23S rRNA in the presence of protein L20. The sequence is that of Large ribosomal subunit protein bL21 from Staphylococcus aureus.